The primary structure comprises 257 residues: Ribonuclease HII (257 aa).

One can recognise an RNase H type-2 domain in the interval 72-257 (TYIAGIDEVG…FAPIKDMIQK (186 aa)). D78, E79, and D170 together coordinate a divalent metal cation.

This sequence belongs to the RNase HII family. It depends on Mn(2+) as a cofactor. Mg(2+) serves as cofactor.

The protein resides in the cytoplasm. It catalyses the reaction Endonucleolytic cleavage to 5'-phosphomonoester.. Its function is as follows. Endonuclease that specifically degrades the RNA of RNA-DNA hybrids. This Bacillus mycoides (strain KBAB4) (Bacillus weihenstephanensis) protein is Ribonuclease HII.